A 499-amino-acid polypeptide reads, in one-letter code: Glycerol kinase (499 aa).

Thr-12 is an ADP binding site. Thr-12, Thr-13, and Ser-14 together coordinate ATP. Residue Thr-12 coordinates sn-glycerol 3-phosphate. Arg-16 is an ADP binding site. The sn-glycerol 3-phosphate site is built by Arg-82, Glu-83, Tyr-134, and Asp-245. 5 residues coordinate glycerol: Arg-82, Glu-83, Tyr-134, Asp-245, and Gln-246. ADP is bound by residues Thr-267 and Gly-311. 4 residues coordinate ATP: Thr-267, Gly-311, Gln-315, and Gly-412. Residues Gly-412 and Asn-416 each contribute to the ADP site.

Belongs to the FGGY kinase family.

The catalysed reaction is glycerol + ATP = sn-glycerol 3-phosphate + ADP + H(+). The protein operates within polyol metabolism; glycerol degradation via glycerol kinase pathway; sn-glycerol 3-phosphate from glycerol: step 1/1. Inhibited by fructose 1,6-bisphosphate (FBP). Functionally, key enzyme in the regulation of glycerol uptake and metabolism. Catalyzes the phosphorylation of glycerol to yield sn-glycerol 3-phosphate. The protein is Glycerol kinase of Acidiphilium cryptum (strain JF-5).